Here is a 98-residue protein sequence, read N- to C-terminus: Large ribosomal subunit protein eL21 (98 aa).

Residues 1-24 show a composition bias toward basic residues; the sequence is MVKKAHSFRRKTRGKLSKHPRRRG. The tract at residues 1-27 is disordered; it reads MVKKAHSFRRKTRGKLSKHPRRRGLPP.

Belongs to the eukaryotic ribosomal protein eL21 family. In terms of assembly, part of the 50S ribosomal subunit.

This chain is Large ribosomal subunit protein eL21, found in Thermococcus kodakarensis (strain ATCC BAA-918 / JCM 12380 / KOD1) (Pyrococcus kodakaraensis (strain KOD1)).